The sequence spans 474 residues: tRNA-2-methylthio-N(6)-dimethylallyladenosine synthase (474 aa).

The MTTase N-terminal domain occupies 3–120 (QKLHIKTWGC…LPEMINQIRG (118 aa)). Residues cysteine 12, cysteine 49, cysteine 83, cysteine 157, cysteine 161, and cysteine 164 each contribute to the [4Fe-4S] cluster site. The Radical SAM core domain maps to 143–375 (RAEGPTAFVS…QQRINNQAAQ (233 aa)). Positions 378–441 (RAMLGTEQRV…TNSLRGEVVR (64 aa)) constitute a TRAM domain.

This sequence belongs to the methylthiotransferase family. MiaB subfamily. In terms of assembly, monomer. The cofactor is [4Fe-4S] cluster.

The protein localises to the cytoplasm. The catalysed reaction is N(6)-dimethylallyladenosine(37) in tRNA + (sulfur carrier)-SH + AH2 + 2 S-adenosyl-L-methionine = 2-methylsulfanyl-N(6)-dimethylallyladenosine(37) in tRNA + (sulfur carrier)-H + 5'-deoxyadenosine + L-methionine + A + S-adenosyl-L-homocysteine + 2 H(+). Catalyzes the methylthiolation of N6-(dimethylallyl)adenosine (i(6)A), leading to the formation of 2-methylthio-N6-(dimethylallyl)adenosine (ms(2)i(6)A) at position 37 in tRNAs that read codons beginning with uridine. The protein is tRNA-2-methylthio-N(6)-dimethylallyladenosine synthase of Pasteurella multocida (strain Pm70).